A 192-amino-acid polypeptide reads, in one-letter code: Fe/S biogenesis protein NfuA (192 aa).

Positions 149 and 152 each coordinate [4Fe-4S] cluster.

It belongs to the NfuA family. As to quaternary structure, homodimer. Requires [4Fe-4S] cluster as cofactor.

Involved in iron-sulfur cluster biogenesis. Binds a 4Fe-4S cluster, can transfer this cluster to apoproteins, and thereby intervenes in the maturation of Fe/S proteins. Could also act as a scaffold/chaperone for damaged Fe/S proteins. The polypeptide is Fe/S biogenesis protein NfuA (Alteromonas mediterranea (strain DSM 17117 / CIP 110805 / LMG 28347 / Deep ecotype)).